The chain runs to 178 residues: Nascent polypeptide-associated complex subunit alpha (178 aa).

In terms of domain architecture, NAC-A/B spans 20-84 (SKNEKKAREL…AKVDDMNKRI (65 aa)). A compositionally biased stretch (low complexity) spans 87-104 (AQAQQEQQEALTKAAADA). The tract at residues 87-142 (AQAQQEQQEALTKAAADAETADKSPESITNDLQNASLEDKTVEEDEGEVDETGLDS) is disordered. Residues 112-122 (ESITNDLQNAS) show a composition bias toward polar residues. Acidic residues predominate over residues 127 to 139 (TVEEDEGEVDETG). Residues 140-178 (LDSKDIEIIVEQTQVSRAKAVKALRAHKGDMVNAIMELS) enclose the UBA domain.

Belongs to the NAC-alpha family. As to quaternary structure, part of the nascent polypeptide-associated complex (NAC), consisting of EGD2 and EGD1. NAC associates with ribosomes via EGD1.

It localises to the cytoplasm. The protein localises to the nucleus. Its function is as follows. Component of the nascent polypeptide-associated complex (NAC), a dynamic component of the ribosomal exit tunnel, protecting the emerging polypeptides from interaction with other cytoplasmic proteins to ensure appropriate nascent protein targeting. The NAC complex also promotes mitochondrial protein import by enhancing productive ribosome interactions with the outer mitochondrial membrane and blocks the inappropriate interaction of ribosomes translating non-secretory nascent polypeptides with translocation sites in the membrane of the endoplasmic reticulum. EGD2 may also be involved in transcription regulation. This chain is Nascent polypeptide-associated complex subunit alpha (EGD2), found in Meyerozyma guilliermondii (strain ATCC 6260 / CBS 566 / DSM 6381 / JCM 1539 / NBRC 10279 / NRRL Y-324) (Yeast).